Reading from the N-terminus, the 114-residue chain is Protein ORF3 (114 aa).

The tract at residues 1 to 28 (MGSRPCALGLFCCCSSCFCLCCPRHRPV) is membrane association. Hydrophobic regions lie at residues 6 to 22 (CALGLFCCCSSCFCLCC) and 33 to 53 (AAVGGAAAVPAVVSGVTGLIL). Positions 6-22 (CALGLFCCCSSCFCLCC) are induction of host SIRPA expression. The tract at residues 28–68 (VSRLAAAVGGAAAVPAVVSGVTGLILSPSQSPIFIQPTPSP) is interaction with host HPX. The interaction with the capsid protein stretch occupies residues 48–72 (VTGLILSPSQSPIFIQPTPSPPMSP). Serine 71 is modified (phosphoserine; by host). A homodimerization, and interaction with host AMBP/bikunin region spans residues 72 to 114 (PLRPGLDLVFANPPDHSAPLGVTRPSAPPLPHVVDLPQLGPRR). The interval 91–114 (LGVTRPSAPPLPHVVDLPQLGPRR) is disordered. The interval 95–104 (RPSAPPLPHV) is interaction with host SRC, HCK, FYN, PIK3R3 and GRB2. The PTAP/PSAP motif motif lies at 96 to 99 (PSAP).

The protein belongs to the hepevirus ORF3 protein family. As to quaternary structure, forms homooligomers. Interacts with host SRC, HCK, FYN, PIK3R3 and GRB2 (via SH3 domain); binding does not activate the kinases. Interacts with host AMBP/bikunin and AMBP/alpha-1-microglobulin peptides. Interacts with host HPX/hemopexin. Interacts (when phosphorylated) with capsid protein ORF2. Interacts with host TSG101; this interaction plays a role in viral release from the host cell. Interacts with host SIRPA; this interaction down-regulates the phosphorylation of host IRF3. Post-translationally, palmitoylated in the N-terminus.

Its subcellular location is the host endoplasmic reticulum membrane. The protein localises to the host cytoplasm. It is found in the host cytoskeleton. The protein resides in the virion. It localises to the host cell membrane. Small multifunctional phosphoprotein involved in virion morphogenesis, egress and counteracting host innate immunity. Plays critical roles in the final steps of viral release by interacting with host TSG101, a member of the vacuolar protein-sorting pathway and using other cellular host proteins involved in vesicle formation pathway. Also acts as a viroporin and forms ion conductive pores allowing viral particle release. Impairs the generation of type I interferon by down-regulating host TLR3 and TLR7 as well as their downstream signaling pathways. Down-regulates the phosphorylation of host IRF3 via the interaction with host SIRP-alpha, thereby inhibiting IFN-I expression. Interacts with host microtubules. The sequence is that of Protein ORF3 from Hepatitis E virus genotype 1 (isolate Human/China/HeBei/1987) (HEV).